The chain runs to 440 residues: MSITYSAISFSGFSPKSVPFAIHSVTRRQFLNPNTFYRFGFSPSLQGSSIEFSLQLNSRVVLSKERRSLPLVVRNDRPQNEDLPKQYTRREKKPFPVPIVDLRRAARERVKNNKDKPKRPLPPPKNGMVVKSLVPLAYKVYNARIRLINNLHRLMKVVRVNACGWCNEIHVGPYGHPFKSCKGPNTSQRKGLHEWTNSVIEDVIVPLEAYHLFDRLGKRIRHDERFSIPRVPAVVELCIQGGVEIPEFPAKRRRKPIIRIGKSEFVDADETELPDPEPQPPPVPLLTELPVSEITPPSSEEETVSLAEETLQAWEEMRAGAKKLMRMYRVRVCGYCPEVHVGPTGHKAQNCGAFKHQQRNGQHGWQSAVLDDLIPPRYVWHVPDVNGPPMQRELRSFYGQAPAVVEICAQAGAVVPEHYRATMRLEVGIPSSVKEAEMVV.

Residues 1-62 constitute a chloroplast transit peptide; it reads MSITYSAISF…SLQLNSRVVL (62 aa). Basic and acidic residues predominate over residues 106 to 115; it reads ARERVKNNKD. Residues 106–126 form a disordered region; that stretch reads ARERVKNNKDKPKRPLPPPKN. 2 consecutive APO domains span residues 162 to 247 and 332 to 417; these read ACGW…EIPE and VCGY…VVPE.

The protein belongs to the APO family.

The protein resides in the plastid. It localises to the chloroplast. In terms of biological role, may be involved in the stable assembly of several 4Fe-4S cluster-containing complexes of chloroplasts. This Arabidopsis thaliana (Mouse-ear cress) protein is APO protein 2, chloroplastic (APO2).